The chain runs to 303 residues: 4-hydroxy-tetrahydrodipicolinate synthase (303 aa).

T57 lines the pyruvate pocket. Y143 acts as the Proton donor/acceptor in catalysis. K171 acts as the Schiff-base intermediate with substrate in catalysis. Pyruvate is bound at residue I211.

Belongs to the DapA family. Homotetramer; dimer of dimers.

The protein resides in the cytoplasm. The enzyme catalyses L-aspartate 4-semialdehyde + pyruvate = (2S,4S)-4-hydroxy-2,3,4,5-tetrahydrodipicolinate + H2O + H(+). It participates in amino-acid biosynthesis; L-lysine biosynthesis via DAP pathway; (S)-tetrahydrodipicolinate from L-aspartate: step 3/4. Its function is as follows. Catalyzes the condensation of (S)-aspartate-beta-semialdehyde [(S)-ASA] and pyruvate to 4-hydroxy-tetrahydrodipicolinate (HTPA). This chain is 4-hydroxy-tetrahydrodipicolinate synthase, found in Bifidobacterium animalis subsp. lactis (strain AD011).